Here is a 475-residue protein sequence, read N- to C-terminus: uncharacterized protein (475 aa).

The chain crosses the membrane as a helical span at residues 19-39 (IKVGVFFVAILLILTGILLTI). Disordered stretches follow at residues 55-79 (GEYH…NATS) and 330-350 (SSPF…PHKG). Residues 60–79 (LNTSPNENSTALQPDENATS) show a composition bias toward polar residues. Residues 336 to 348 (NRRHPVTGRIRPH) show a composition bias toward basic residues. H348 is a binding site for Zn(2+).

In the central section; belongs to the OapA family. The protein in the C-terminal section; belongs to the peptidase M23B family. Requires Zn(2+) as cofactor.

The protein localises to the cell membrane. This is an uncharacterized protein from Haemophilus influenzae (strain ATCC 51907 / DSM 11121 / KW20 / Rd).